Consider the following 554-residue polypeptide: Glutamine--tRNA ligase (554 aa).

The 'HIGH' region motif lies at 34 to 44; sequence PEPNGYLHIGH. ATP-binding positions include 35-37 and 41-47; these read EPN and HIGHAKS. Residues D67 and Y212 each contribute to the L-glutamine site. ATP is bound by residues T231, 261 to 262, and 269 to 271; these read RL and MSK. Positions 268-272 match the 'KMSKS' region motif; the sequence is VMSKR. Positions 317 to 324 are interaction with tRNA; it reads TKQDNTIE.

This sequence belongs to the class-I aminoacyl-tRNA synthetase family. As to quaternary structure, monomer.

The protein resides in the cytoplasm. It carries out the reaction tRNA(Gln) + L-glutamine + ATP = L-glutaminyl-tRNA(Gln) + AMP + diphosphate. The polypeptide is Glutamine--tRNA ligase (Shigella flexneri serotype 5b (strain 8401)).